The sequence spans 236 residues: Ureidoacrylate amidohydrolase RutB (236 aa).

The Proton acceptor role is filled by Asp24. Lys133 is a catalytic residue. The active-site Nucleophile is Cys166.

Belongs to the isochorismatase family. RutB subfamily.

It catalyses the reaction (Z)-3-ureidoacrylate + H2O + H(+) = (Z)-3-aminoacrylate + NH4(+) + CO2. The enzyme catalyses (Z)-3-ureidoacrylate + H2O = (Z)-3-aminoacrylate + carbamate + H(+). The catalysed reaction is (Z)-2-methylureidoacrylate + H2O + H(+) = (Z)-2-methylaminoacrylate + NH4(+) + CO2. In terms of biological role, hydrolyzes ureidoacrylate to form aminoacrylate and carbamate. The carbamate hydrolyzes spontaneously, thereby releasing one of the nitrogen atoms of the pyrimidine ring as ammonia and one of its carbon atoms as CO2. This is Ureidoacrylate amidohydrolase RutB from Klebsiella pneumoniae subsp. pneumoniae (strain ATCC 700721 / MGH 78578).